The sequence spans 323 residues: Pantothenate kinase (323 aa).

An ATP-binding site is contributed by 101–108 (GSVAVGKS).

This sequence belongs to the prokaryotic pantothenate kinase family.

The protein resides in the cytoplasm. The enzyme catalyses (R)-pantothenate + ATP = (R)-4'-phosphopantothenate + ADP + H(+). Its pathway is cofactor biosynthesis; coenzyme A biosynthesis; CoA from (R)-pantothenate: step 1/5. The polypeptide is Pantothenate kinase (Xanthobacter autotrophicus (strain ATCC BAA-1158 / Py2)).